A 574-amino-acid polypeptide reads, in one-letter code: MSIEAAENLRAAEALLSALMGLGLQRVVLCPGSRSGPLALAASRLESHGLALTTGIDERSAGFFALGQTRADGQPTAVITTSGTAVANLLPAAVEADFSALPLLLLTADRPERLKACGANQTVNQEAYLQPACRALLQGPAAGLHDASDERLLRLAQSAMRHALGAPAGPVHLNLAFDEPLHADLSGLPAAAPPAAQELPPLFEPPGLGSLEPLDPDQPGVIVVGPWRRGHGGRFVAALQQLNRRTGWPILADASSGLRGLPLPLVSGYDLLLAEPQRLPPAHQVLRLGSMPASRRLQQWLQTFEGPQLVITEAEPRRQDPLASGCAQHPHGLAAWVELLPTGEPSATSRADAARWQQAESLLQQQLDHDLPLQGPCSEPALARALQNLIPSEWPVMLASSSPVRDWESFAGRQSGHRTIVSFRGASGIDGTLSLAAGIAQQWQRLVLVTGDLALLHDANGWLWRRQLSGELRLVVIDNGGGGVFEQLPIPRQSMDFDRLFAMPQSCDAMALAAAHGVAARDCSAMETLAADLQWLLEPGDAMRLLRCSTDRSRDAQLRQQLRDKPWWEQTPAP.

The protein belongs to the TPP enzyme family. MenD subfamily. As to quaternary structure, homodimer. Mg(2+) is required as a cofactor. The cofactor is Mn(2+). It depends on thiamine diphosphate as a cofactor.

The catalysed reaction is isochorismate + 2-oxoglutarate + H(+) = 5-enolpyruvoyl-6-hydroxy-2-succinyl-cyclohex-3-ene-1-carboxylate + CO2. It functions in the pathway quinol/quinone metabolism; 1,4-dihydroxy-2-naphthoate biosynthesis; 1,4-dihydroxy-2-naphthoate from chorismate: step 2/7. Its pathway is cofactor biosynthesis; phylloquinone biosynthesis. Catalyzes the thiamine diphosphate-dependent decarboxylation of 2-oxoglutarate and the subsequent addition of the resulting succinic semialdehyde-thiamine pyrophosphate anion to isochorismate to yield 2-succinyl-5-enolpyruvyl-6-hydroxy-3-cyclohexene-1-carboxylate (SEPHCHC). The protein is 2-succinyl-5-enolpyruvyl-6-hydroxy-3-cyclohexene-1-carboxylate synthase of Synechococcus sp. (strain RCC307).